The primary structure comprises 403 residues: NADH-quinone oxidoreductase subunit D (403 aa).

It belongs to the complex I 49 kDa subunit family. In terms of assembly, NDH-1 is composed of 15 different subunits. Subunits NuoB, C, D, E, F, and G constitute the peripheral sector of the complex.

The protein localises to the cell membrane. The catalysed reaction is a quinone + NADH + 5 H(+)(in) = a quinol + NAD(+) + 4 H(+)(out). In terms of biological role, NDH-1 shuttles electrons from NADH, via FMN and iron-sulfur (Fe-S) centers, to quinones in the respiratory chain. The immediate electron acceptor for the enzyme in this species is believed to be a menaquinone. Couples the redox reaction to proton translocation (for every two electrons transferred, four hydrogen ions are translocated across the cytoplasmic membrane), and thus conserves the redox energy in a proton gradient. The protein is NADH-quinone oxidoreductase subunit D of Deinococcus geothermalis (strain DSM 11300 / CIP 105573 / AG-3a).